A 235-amino-acid polypeptide reads, in one-letter code: 5'-methylthioadenosine/S-adenosylhomocysteine nucleosidase (235 aa).

E12 acts as the Proton acceptor in catalysis. Substrate-binding positions include G78, I152, and 173 to 174; that span reads ME. Residue D197 is the Proton donor of the active site.

The protein belongs to the PNP/UDP phosphorylase family. MtnN subfamily. In terms of assembly, homodimer.

The enzyme catalyses S-adenosyl-L-homocysteine + H2O = S-(5-deoxy-D-ribos-5-yl)-L-homocysteine + adenine. It catalyses the reaction S-methyl-5'-thioadenosine + H2O = 5-(methylsulfanyl)-D-ribose + adenine. The catalysed reaction is 5'-deoxyadenosine + H2O = 5-deoxy-D-ribose + adenine. Its pathway is amino-acid biosynthesis; L-methionine biosynthesis via salvage pathway; S-methyl-5-thio-alpha-D-ribose 1-phosphate from S-methyl-5'-thioadenosine (hydrolase route): step 1/2. In terms of biological role, catalyzes the irreversible cleavage of the glycosidic bond in both 5'-methylthioadenosine (MTA) and S-adenosylhomocysteine (SAH/AdoHcy) to adenine and the corresponding thioribose, 5'-methylthioribose and S-ribosylhomocysteine, respectively. Also cleaves 5'-deoxyadenosine, a toxic by-product of radical S-adenosylmethionine (SAM) enzymes, into 5-deoxyribose and adenine. Thus, is required for in vivo function of the radical SAM enzymes biotin synthase and lipoic acid synthase, that are inhibited by 5'-deoxyadenosine accumulation. The chain is 5'-methylthioadenosine/S-adenosylhomocysteine nucleosidase from Buchnera aphidicola subsp. Schizaphis graminum (strain Sg).